Reading from the N-terminus, the 672-residue chain is Nuclear hormone receptor family member nhr-5 (672 aa).

Over residues 1–19 (MSSGGNSSNVNRNSGSSNV) the composition is skewed to low complexity. Positions 1–38 (MSSGGNSSNVNRNSGSSNVITLNDSDEETEDSNLGSSS) are disordered. Residues 40–115 (TNLCKVCGAE…EGMNPAYVRP (76 aa)) constitute a DNA-binding region (nuclear receptor). NR C4-type zinc fingers lie at residues 43 to 63 (CKVCGAEKAALHYGALSCVGC) and 79 to 98 (CAANGECTVSVLQKTQCRSC). The 270-residue stretch at 155-424 (EMRTILMTLL…PLLTDLFGCF (270 aa)) folds into the NR LBD domain. Positions 550–577 (NIQGPSHLPQCGSTVTQRPTVPSSTTSS) are disordered. Residues 562-577 (STVTQRPTVPSSTTSS) are compositionally biased toward low complexity.

The protein belongs to the nuclear hormone receptor family.

It localises to the nucleus. Functionally, orphan nuclear receptor. This is Nuclear hormone receptor family member nhr-5 (nhr-5) from Caenorhabditis elegans.